Here is a 597-residue protein sequence, read N- to C-terminus: Pentatricopeptide repeat-containing protein At2g21090 (597 aa).

PPR repeat units follow at residues 45–79 (PFDL…GFKR), 81–111 (NTLL…MHLR), 112–142 (NLYS…MPER), 143–177 (DVVS…GIKF), 178–212 (NEFS…GFLS), 213–243 (NVVL…MTVK), 244–274 (DIHI…MPEK), 275–309 (NPVS…GVKP), 310–344 (EQFT…NVRP), 345–375 (NAIV…CDDK), 377–411 (DCVF…RVQP), 412–447 (NRTT…GIVP), and 448–478 (DQEH…MPFE). The segment at 483-558 (IWNAILGVCR…EKAVSWIEIE (76 aa)) is type E motif. The tract at residues 559–591 (KKVEAFTVSDGSHAHARKEEIYFILHNLAAVIE) is type E(+) motif.

It belongs to the PPR family. PCMP-E subfamily.

This Arabidopsis thaliana (Mouse-ear cress) protein is Pentatricopeptide repeat-containing protein At2g21090 (PCMP-E48).